The sequence spans 382 residues: Glutamyl-tRNA reductase (382 aa).

Substrate contacts are provided by residues 38-41, S85, 90-92, and Q96; these read TCNR and ENQ. The active-site Nucleophile is C39. NADP(+) is bound at residue 164–169; it reads GAGEIG.

This sequence belongs to the glutamyl-tRNA reductase family. Homodimer.

The catalysed reaction is (S)-4-amino-5-oxopentanoate + tRNA(Glu) + NADP(+) = L-glutamyl-tRNA(Glu) + NADPH + H(+). Its pathway is porphyrin-containing compound metabolism; protoporphyrin-IX biosynthesis; 5-aminolevulinate from L-glutamyl-tRNA(Glu): step 1/2. Functionally, catalyzes the NADPH-dependent reduction of glutamyl-tRNA(Glu) to glutamate 1-semialdehyde (GSA). In Methanococcus maripaludis (strain DSM 14266 / JCM 13030 / NBRC 101832 / S2 / LL), this protein is Glutamyl-tRNA reductase.